The following is a 445-amino-acid chain: 3-phosphoshikimate 1-carboxyvinyltransferase (445 aa).

Residues lysine 28, serine 29, and arginine 33 each contribute to the 3-phosphoshikimate site. Phosphoenolpyruvate is bound at residue lysine 28. 2 residues coordinate phosphoenolpyruvate: glycine 101 and arginine 129. 3-phosphoshikimate is bound by residues serine 175, glutamine 177, aspartate 328, and lysine 355. Residue glutamine 177 coordinates phosphoenolpyruvate. Aspartate 328 functions as the Proton acceptor in the catalytic mechanism. Residues arginine 359 and arginine 402 each contribute to the phosphoenolpyruvate site.

It belongs to the EPSP synthase family. As to quaternary structure, monomer.

It is found in the cytoplasm. It carries out the reaction 3-phosphoshikimate + phosphoenolpyruvate = 5-O-(1-carboxyvinyl)-3-phosphoshikimate + phosphate. Its pathway is metabolic intermediate biosynthesis; chorismate biosynthesis; chorismate from D-erythrose 4-phosphate and phosphoenolpyruvate: step 6/7. In terms of biological role, catalyzes the transfer of the enolpyruvyl moiety of phosphoenolpyruvate (PEP) to the 5-hydroxyl of shikimate-3-phosphate (S3P) to produce enolpyruvyl shikimate-3-phosphate and inorganic phosphate. The protein is 3-phosphoshikimate 1-carboxyvinyltransferase of Rhodopseudomonas palustris (strain HaA2).